Reading from the N-terminus, the 154-residue chain is Ribosome maturation factor RimP (154 aa).

This sequence belongs to the RimP family.

Its subcellular location is the cytoplasm. Its function is as follows. Required for maturation of 30S ribosomal subunits. The polypeptide is Ribosome maturation factor RimP (Hydrogenobaculum sp. (strain Y04AAS1)).